A 262-amino-acid chain; its full sequence is Hydroxyethylthiazole kinase (262 aa).

Met-50 is a binding site for substrate. Positions 125 and 171 each coordinate ATP. A substrate-binding site is contributed by Gly-198.

This sequence belongs to the Thz kinase family. Requires Mg(2+) as cofactor.

It carries out the reaction 5-(2-hydroxyethyl)-4-methylthiazole + ATP = 4-methyl-5-(2-phosphooxyethyl)-thiazole + ADP + H(+). The protein operates within cofactor biosynthesis; thiamine diphosphate biosynthesis; 4-methyl-5-(2-phosphoethyl)-thiazole from 5-(2-hydroxyethyl)-4-methylthiazole: step 1/1. Functionally, catalyzes the phosphorylation of the hydroxyl group of 4-methyl-5-beta-hydroxyethylthiazole (THZ). The polypeptide is Hydroxyethylthiazole kinase (Shigella boydii serotype 4 (strain Sb227)).